A 124-amino-acid chain; its full sequence is Small ribosomal subunit protein bS6m (124 aa).

The protein belongs to the bacterial ribosomal protein bS6 family. Component of the mitochondrial ribosome small subunit (28S) which comprises a 12S rRNA and about 30 distinct proteins.

The protein resides in the mitochondrion. This Bos taurus (Bovine) protein is Small ribosomal subunit protein bS6m (MRPS6).